Reading from the N-terminus, the 361-residue chain is Chorismate synthase (361 aa).

Residues Arg-48 and Arg-54 each contribute to the NADP(+) site. FMN is bound by residues 125-127 (RSS), 238-239 (NA), Gly-278, 293-297 (KPTSS), and Arg-319.

It belongs to the chorismate synthase family. As to quaternary structure, homotetramer. Requires FMNH2 as cofactor.

The enzyme catalyses 5-O-(1-carboxyvinyl)-3-phosphoshikimate = chorismate + phosphate. It functions in the pathway metabolic intermediate biosynthesis; chorismate biosynthesis; chorismate from D-erythrose 4-phosphate and phosphoenolpyruvate: step 7/7. Functionally, catalyzes the anti-1,4-elimination of the C-3 phosphate and the C-6 proR hydrogen from 5-enolpyruvylshikimate-3-phosphate (EPSP) to yield chorismate, which is the branch point compound that serves as the starting substrate for the three terminal pathways of aromatic amino acid biosynthesis. This reaction introduces a second double bond into the aromatic ring system. This Enterobacter sp. (strain 638) protein is Chorismate synthase.